We begin with the raw amino-acid sequence, 994 residues long: Phosphoenolpyruvate carboxylase (994 aa).

Residues 1-66 (MKSSGSARAT…QGRTREDKDR (66 aa)) are disordered. Composition is skewed to low complexity over residues 14-25 (AVSSSSAPAHAE) and 41-54 (AAARPLAPTNAASA). Catalysis depends on residues histidine 204 and lysine 646.

This sequence belongs to the PEPCase type 1 family. Mg(2+) is required as a cofactor.

The catalysed reaction is oxaloacetate + phosphate = phosphoenolpyruvate + hydrogencarbonate. Its function is as follows. Forms oxaloacetate, a four-carbon dicarboxylic acid source for the tricarboxylic acid cycle. The sequence is that of Phosphoenolpyruvate carboxylase from Burkholderia mallei (strain NCTC 10247).